The chain runs to 416 residues: 3-oxoacyl-[acyl-carrier-protein] synthase 2 (416 aa).

The 409-residue stretch at 6–414 folds into the Ketosynthase family 3 (KS3) domain; that stretch reads KKRVVVTGLG…GHNVTLAFKK (409 aa). Residues C167, H307, and H344 each act as for beta-ketoacyl synthase activity in the active site.

It belongs to the thiolase-like superfamily. Beta-ketoacyl-ACP synthases family. In terms of assembly, homodimer.

The catalysed reaction is a fatty acyl-[ACP] + malonyl-[ACP] + H(+) = a 3-oxoacyl-[ACP] + holo-[ACP] + CO2. The enzyme catalyses (9Z)-hexadecenoyl-[ACP] + malonyl-[ACP] + H(+) = 3-oxo-(11Z)-octadecenoyl-[ACP] + holo-[ACP] + CO2. The protein operates within lipid metabolism; fatty acid biosynthesis. Functionally, involved in the type II fatty acid elongation cycle. Catalyzes the elongation of a wide range of acyl-ACP by the addition of two carbons from malonyl-ACP to an acyl acceptor. Can efficiently catalyze the conversion of palmitoleoyl-ACP (cis-hexadec-9-enoyl-ACP) to cis-vaccenoyl-ACP (cis-octadec-11-enoyl-ACP), an essential step in the thermal regulation of fatty acid composition. The chain is 3-oxoacyl-[acyl-carrier-protein] synthase 2 (fabF) from Synechocystis sp. (strain ATCC 27184 / PCC 6803 / Kazusa).